We begin with the raw amino-acid sequence, 345 residues long: MSSLRLRLCLLLLLPITISCVTVTLTDLPAFREAPAFRNGRECSKTTWIPSDHEHNPSIIHIAMTLDAIYLRGSVAGVFSVLQHASCPENIVFHFIATHRRSADLRRIISSTFPYLTYHIYHFDPNLVRSKISSSIRRALDQPLNYARIYLADLLPIAVRRVIYFDSDLVVVDDVAKLWRIDLRRHVVGAPEYCHANFTNYFTSRFWSSQGYKSALKDRKPCYFNTGVMVIDLGKWRERRVTVKLETWMRIQKRHRIYELGSLPPFLLVFAGDVEPVEHRWNQHGLGGDNLEGLCRNLHPGPVSLLHWSGKGKPWLRLDSRRPCPLDSLWAPYDLFRYSPLISDS.

Residues 1–7 are Cytoplasmic-facing; it reads MSSLRLR. The chain crosses the membrane as a helical; Signal-anchor for type II membrane protein span at residues 8-28; that stretch reads LCLLLLLPITISCVTVTLTDL. The Lumenal segment spans residues 29-345; the sequence is PAFREAPAFR…FRYSPLISDS (317 aa). N-linked (GlcNAc...) asparagine glycosylation is present at N197.

It belongs to the glycosyltransferase 8 family.

It is found in the golgi apparatus membrane. The protein operates within glycan metabolism; pectin biosynthesis. In terms of biological role, may be involved in pectin and/or xylans biosynthesis in cell walls. The sequence is that of Probable galacturonosyltransferase-like 3 (GATL3) from Arabidopsis thaliana (Mouse-ear cress).